The following is an 84-amino-acid chain: ATP synthase subunit c (84 aa).

2 helical membrane passes run 1–21 and 53–73; these read MLAW…ALVG and LLFA…VALI.

The protein belongs to the ATPase C chain family. As to quaternary structure, F-type ATPases have 2 components, F(1) - the catalytic core - and F(0) - the membrane proton channel. F(1) has five subunits: alpha(3), beta(3), gamma(1), delta(1), epsilon(1). F(0) has three main subunits: a(1), b(2) and c(10-14). The alpha and beta chains form an alternating ring which encloses part of the gamma chain. F(1) is attached to F(0) by a central stalk formed by the gamma and epsilon chains, while a peripheral stalk is formed by the delta and b chains.

It is found in the cell inner membrane. Functionally, f(1)F(0) ATP synthase produces ATP from ADP in the presence of a proton or sodium gradient. F-type ATPases consist of two structural domains, F(1) containing the extramembraneous catalytic core and F(0) containing the membrane proton channel, linked together by a central stalk and a peripheral stalk. During catalysis, ATP synthesis in the catalytic domain of F(1) is coupled via a rotary mechanism of the central stalk subunits to proton translocation. Its function is as follows. Key component of the F(0) channel; it plays a direct role in translocation across the membrane. A homomeric c-ring of between 10-14 subunits forms the central stalk rotor element with the F(1) delta and epsilon subunits. This chain is ATP synthase subunit c, found in Dictyoglomus thermophilum (strain ATCC 35947 / DSM 3960 / H-6-12).